Here is a 262-residue protein sequence, read N- to C-terminus: Small ribosomal subunit protein eS1z (262 aa).

Over residues 1 to 18 (MAVGKNKRISKGRKGGKK) the composition is skewed to basic residues. The tract at residues 1–21 (MAVGKNKRISKGRKGGKKKAV) is disordered.

The protein belongs to the eukaryotic ribosomal protein eS1 family. Component of the small ribosomal subunit. Mature ribosomes consist of a small (40S) and a large (60S) subunit. The 40S subunit contains about 33 different proteins and 1 molecule of RNA (18S). The 60S subunit contains about 49 different proteins and 3 molecules of RNA (25S, 5.8S and 5S).

It localises to the cytoplasm. This is Small ribosomal subunit protein eS1z from Arabidopsis thaliana (Mouse-ear cress).